Consider the following 254-residue polypeptide: Probable phosphomannomutase (254 aa).

Asp14 (nucleophile) is an active-site residue. Mg(2+) is bound by residues Asp14 and Asp16. Asp16 serves as the catalytic Proton donor/acceptor. Alpha-D-mannose 1-phosphate-binding residues include Arg23, Arg129, Arg140, Arg147, Ser185, and Asp187. Residues Asp214, Phe226, Asp228, and Thr231 each coordinate Mg(2+).

The protein belongs to the eukaryotic PMM family. Homodimer.

It localises to the cytoplasm. The catalysed reaction is alpha-D-mannose 1-phosphate = D-mannose 6-phosphate. The protein operates within nucleotide-sugar biosynthesis; GDP-alpha-D-mannose biosynthesis; alpha-D-mannose 1-phosphate from D-fructose 6-phosphate: step 2/2. Functionally, involved in the synthesis of the GDP-mannose and dolichol-phosphate-mannose required for a number of critical mannosyl transfer reactions. This Caenorhabditis elegans protein is Probable phosphomannomutase.